Here is a 189-residue protein sequence, read N- to C-terminus: Interferon alpha-16 (189 aa).

The first 23 residues, 1-23, serve as a signal peptide directing secretion; that stretch reads MALSFSLLMAVLVLSYKSICSLG. Cystine bridges form between C24-C122 and C52-C162.

This sequence belongs to the alpha/beta interferon family.

It localises to the secreted. Its function is as follows. Produced by macrophages, IFN-alpha have antiviral activities. Interferon stimulates the production of two enzymes: a protein kinase and an oligoadenylate synthetase. The chain is Interferon alpha-16 (IFNA16) from Homo sapiens (Human).